The sequence spans 194 residues: Potassium-transporting ATPase KdpC subunit (194 aa).

The helical transmembrane segment at 12-34 (LFLLLLTGGVYPLLTTALGQWWF) threads the bilayer.

It belongs to the KdpC family. The system is composed of three essential subunits: KdpA, KdpB and KdpC.

The protein localises to the cell inner membrane. In terms of biological role, part of the high-affinity ATP-driven potassium transport (or Kdp) system, which catalyzes the hydrolysis of ATP coupled with the electrogenic transport of potassium into the cytoplasm. This subunit acts as a catalytic chaperone that increases the ATP-binding affinity of the ATP-hydrolyzing subunit KdpB by the formation of a transient KdpB/KdpC/ATP ternary complex. The protein is Potassium-transporting ATPase KdpC subunit of Salmonella agona (strain SL483).